Reading from the N-terminus, the 475-residue chain is Glycogen synthase (475 aa).

Lys15 serves as a coordination point for ADP-alpha-D-glucose.

Belongs to the glycosyltransferase 1 family. Bacterial/plant glycogen synthase subfamily.

The enzyme catalyses [(1-&gt;4)-alpha-D-glucosyl](n) + ADP-alpha-D-glucose = [(1-&gt;4)-alpha-D-glucosyl](n+1) + ADP + H(+). It functions in the pathway glycan biosynthesis; glycogen biosynthesis. Functionally, synthesizes alpha-1,4-glucan chains using ADP-glucose. The sequence is that of Glycogen synthase from Chlamydia felis (strain Fe/C-56) (Chlamydophila felis).